A 464-amino-acid chain; its full sequence is Protein FAM90A12 (464 aa).

Disordered regions lie at residues 1 to 42 (MMAR…DPRL), 70 to 389 (PATL…HDGA), and 411 to 437 (APSF…SEAP). Composition is skewed to basic and acidic residues over residues 74–89 (GKKE…KPRA) and 97–114 (NKDK…DPQR). The span at 180–197 (LASLSPLRKASLSSSSSL) shows a compositional bias: low complexity.

It belongs to the FAM90 family.

This chain is Protein FAM90A12, found in Homo sapiens (Human).